The following is a 153-amino-acid chain: Small ribosomal subunit protein bS6 (153 aa).

The segment at glutamate 97–glutamate 153 is disordered. Residues arginine 105–glutamate 147 are compositionally biased toward basic and acidic residues.

Belongs to the bacterial ribosomal protein bS6 family.

In terms of biological role, binds together with bS18 to 16S ribosomal RNA. The protein is Small ribosomal subunit protein bS6 of Bradyrhizobium sp. (strain BTAi1 / ATCC BAA-1182).